Here is a 46-residue protein sequence, read N- to C-terminus: Defensin-like protein AX2 (46 aa).

Intrachain disulfides connect cysteine 3/cysteine 46, cysteine 14/cysteine 34, cysteine 20/cysteine 40, and cysteine 24/cysteine 42.

Leaves and flowers.

Strong inhibiting activity against C.beticola and other filamentous fungi. Little or no effect against bacteria. The protein is Defensin-like protein AX2 of Beta vulgaris (Sugar beet).